We begin with the raw amino-acid sequence, 110 residues long: Small EDRK-rich factor 1 (110 aa).

Basic and acidic residues predominate over residues 1–30; it reads MARGNQRELARQKNMKKTQEISKGKRKEDS. The disordered stretch occupies residues 1–61; the sequence is MARGNQRELA…GPHLPLKAPR (61 aa). Residues 11–17 form a required for SNCA binding region; the sequence is RQKNMKK. A compositionally biased stretch (low complexity) spans 34 to 50; the sequence is SQRKQSSGGQKSESKMS.

Belongs to the SERF family. Interacts with SNCA; this interaction promotes the aggregation of SNCA. As to expression, isoform Long is predominantly expressed in heart, brain and skeletal muscle. Isoform Short and Isoform Long are expressed throughout the central nervous system, including spinal cord.

It localises to the cytoplasm. It is found in the cytosol. The protein resides in the nucleus. Functionally, positive regulator of amyloid protein aggregation and proteotoxicity. Induces conformational changes in amyloid proteins, such as APP, HTT, and SNCA, driving them into compact formations preceding the formation of aggregates. In Homo sapiens (Human), this protein is Small EDRK-rich factor 1 (SERF1A).